The sequence spans 204 residues: uncharacterized protein (204 aa).

This is an uncharacterized protein from Saccharomyces cerevisiae (strain ATCC 204508 / S288c) (Baker's yeast).